A 417-amino-acid chain; its full sequence is UDP-N-acetylglucosamine 1-carboxyvinyltransferase (417 aa).

22-23 (KN) provides a ligand contact to phosphoenolpyruvate. Position 93 (Arg-93) interacts with UDP-N-acetyl-alpha-D-glucosamine. Cys-117 (proton donor) is an active-site residue. At Cys-117 the chain carries 2-(S-cysteinyl)pyruvic acid O-phosphothioketal. UDP-N-acetyl-alpha-D-glucosamine-binding residues include Asp-304 and Ile-326.

It belongs to the EPSP synthase family. MurA subfamily.

It localises to the cytoplasm. The enzyme catalyses phosphoenolpyruvate + UDP-N-acetyl-alpha-D-glucosamine = UDP-N-acetyl-3-O-(1-carboxyvinyl)-alpha-D-glucosamine + phosphate. It participates in cell wall biogenesis; peptidoglycan biosynthesis. In terms of biological role, cell wall formation. Adds enolpyruvyl to UDP-N-acetylglucosamine. In Neisseria gonorrhoeae (strain ATCC 700825 / FA 1090), this protein is UDP-N-acetylglucosamine 1-carboxyvinyltransferase.